The primary structure comprises 389 residues: Gustatory receptor for bitter taste 22e (389 aa).

The Cytoplasmic segment spans residues 1-14; the sequence is MFRPSGSGYRQKWT. A helical membrane pass occupies residues 15–35; that stretch reads GLTLKGALYGSWILGVFPFAY. Over 36–46 the chain is Extracellular; sequence DSWTRTLRRSK. The chain crosses the membrane as a helical span at residues 47–67; sequence WLIAYGFVLNAAFILLVVTND. At 68 to 142 the chain is on the cytoplasmic side; the sequence is TESETPLRME…SLEECISFDR (75 aa). A helical transmembrane segment spans residues 143-163; that stretch reads FVLYKGFSVVLELVSMLVLEL. Over 164–170 the chain is Extracellular; that stretch reads GMSPNYS. A glycan (N-linked (GlcNAc...) asparagine) is linked at N168. A helical transmembrane segment spans residues 171–191; sequence AQFFIGLGSLCLMLLAVLLGA. Topologically, residues 192 to 254 are cytoplasmic; it reads SHFHLAVVFV…QRLASIYDYQ (63 aa). Residues 255–275 traverse the membrane as a helical segment; it reads MVMVMVSFLIANVLGIYFFII. Topologically, residues 276 to 287 are extracellular; that stretch reads YSISLNKSLDFK. An N-linked (GlcNAc...) asparagine glycan is attached at N281. A helical membrane pass occupies residues 288–308; the sequence is ILVFVQALVINMLDFWLNVEI. Residues 309-366 lie on the Cytoplasmic side of the membrane; sequence CELAERTGRQTSTILKLFNDIENIDEKLERSITDFALFCSHRRLRFHHCGLFYVNYEM. The chain crosses the membrane as a helical span at residues 367–387; sequence GFRMAITSFLYLLFLIQFDYW. The Extracellular segment spans residues 388 to 389; sequence NL.

This sequence belongs to the insect chemoreceptor superfamily. Gustatory receptor (GR) family. Gr22e subfamily. Taste bristles on the labial palp, labral and cibarial sense organs, chemosensory bristles on the leg and anterior wing margin. In larvae, is expressed in neurons of the terminal external chemosensory organ and in the dorsal pharyngeal sense organ. Neurons expressing Gr22e also express Gr66a and correspond to taste neurons that mediate sensitivity to bitter compounds.

The protein resides in the cell membrane. Functionally, gustatory receptor which mediates acceptance or avoidance behavior, depending on its substrates. Seems to be involved in the sensing of bitter taste since it is expressed in neurons that mediate sensitivity to bitter compounds which are also avoidance-type taste neurons. In Drosophila melanogaster (Fruit fly), this protein is Gustatory receptor for bitter taste 22e (Gr22e).